We begin with the raw amino-acid sequence, 396 residues long: MAKEKFERNKPHCNIGTIGHVDHGKTTLTAAITIILAKSGGATAKNYADIDAAPEEKARGITINTAHVEYETANRHYAHVDCPGHADYVKNMITGAAQMDGAILVVSAADGPMPQTREHILLARQVGVPALVVYMNKVDLVDDEELLELVEMEVRELLSSYDFPGDDIPITKGSAKVAIDGGDPVIGEQSILALMKTVDDYIPQPDRPIDLPFLMPVEDVFSISGRGTVVTGRIEKGVVKVGEEVEIVGIRAVQKTTCTGVEMFRKLLDQGQAGDNVGVLLRGTKREDVERGQVLCKPGSITPHTKFVAEAYILTKEEGGRHTPFFTNYRPQFYFRTTDVTGIIKLREGVEMIMPGDNAELDVELITPIAMDQGLRFAIREGGRTVGAGVVAKIVE.

A tr-type G domain is found at 10–206; the sequence is KPHCNIGTIG…TVDDYIPQPD (197 aa). The segment at 19–26 is G1; it reads GHVDHGKT. 19 to 26 lines the GTP pocket; the sequence is GHVDHGKT. Thr-26 is a Mg(2+) binding site. Residues 60–64 are G2; sequence GITIN. The interval 81-84 is G3; the sequence is DCPG. GTP contacts are provided by residues 81–85 and 136–139; these read DCPGH and NKVD. The segment at 136–139 is G4; the sequence is NKVD. Residues 174–176 form a G5 region; the sequence is SAK.

It belongs to the TRAFAC class translation factor GTPase superfamily. Classic translation factor GTPase family. EF-Tu/EF-1A subfamily. As to quaternary structure, monomer.

It is found in the cytoplasm. The catalysed reaction is GTP + H2O = GDP + phosphate + H(+). Functionally, GTP hydrolase that promotes the GTP-dependent binding of aminoacyl-tRNA to the A-site of ribosomes during protein biosynthesis. The chain is Elongation factor Tu 1 from Caulobacter sp. (strain K31).